The sequence spans 502 residues: Probable RNA exonuclease C9B6.11c (502 aa).

Residues 338-379 are disordered; that stretch reads SELEEKNASTKTENDSNEDDKEECQSSSTSSVPESTASTPKK. Basic and acidic residues predominate over residues 341–351; it reads EEKNASTKTEN. The span at 363–376 shows a compositional bias: low complexity; it reads SSSTSSVPESTAST.

Belongs to the CCR4/nocturin family.

Its subcellular location is the cytoplasm. It localises to the nucleus. This is Probable RNA exonuclease C9B6.11c from Schizosaccharomyces pombe (strain 972 / ATCC 24843) (Fission yeast).